The sequence spans 117 residues: Immunoglobulin lambda variable 1-51 (117 aa).

Positions 1–19 are cleaved as a signal peptide; that stretch reads MTCSPLLLTLLIHCTGSWA. Q20 carries the pyrrolidone carboxylic acid modification. Residues 20-44 are framework-1; sequence QSVLTQPPSVSAAPGQKVTISCSGS. In terms of domain architecture, Ig-like spans 20–117; the sequence is QSVLTQPPSV…CGTWDSSLSA (98 aa). A disulfide bond links C41 and C108. A complementarity-determining-1 region spans residues 45 to 52; the sequence is SSNIGNNY. The interval 53–69 is framework-2; the sequence is VSWYQQLPGTAPKLLIY. The tract at residues 70–72 is complementarity-determining-2; sequence DNN. The tract at residues 73–108 is framework-3; sequence KRPSGIPDRFSGSKSGTSATLGITGLQTGDEADYYC. The complementarity-determining-3 stretch occupies residues 109–117; that stretch reads GTWDSSLSA.

Immunoglobulins are composed of two identical heavy chains and two identical light chains; disulfide-linked.

The protein localises to the secreted. Its subcellular location is the cell membrane. V region of the variable domain of immunoglobulin light chains that participates in the antigen recognition. Immunoglobulins, also known as antibodies, are membrane-bound or secreted glycoproteins produced by B lymphocytes. In the recognition phase of humoral immunity, the membrane-bound immunoglobulins serve as receptors which, upon binding of a specific antigen, trigger the clonal expansion and differentiation of B lymphocytes into immunoglobulins-secreting plasma cells. Secreted immunoglobulins mediate the effector phase of humoral immunity, which results in the elimination of bound antigens. The antigen binding site is formed by the variable domain of one heavy chain, together with that of its associated light chain. Thus, each immunoglobulin has two antigen binding sites with remarkable affinity for a particular antigen. The variable domains are assembled by a process called V-(D)-J rearrangement and can then be subjected to somatic hypermutations which, after exposure to antigen and selection, allow affinity maturation for a particular antigen. The protein is Immunoglobulin lambda variable 1-51 of Homo sapiens (Human).